A 231-amino-acid polypeptide reads, in one-letter code: Protein OPG061 (231 aa).

Belongs to the orthopoxvirus OPG058 family.

It localises to the host nucleus. The protein localises to the host nucleolus. The sequence is that of Protein OPG061 (OPG061) from Variola virus.